The primary structure comprises 102 residues: Small ribosomal subunit protein uS10 (102 aa).

Residues 34–58 form a disordered region; it reads LSGPVPLPTKTLEIPARKSPDGEGT.

The protein belongs to the universal ribosomal protein uS10 family. Part of the 30S ribosomal subunit.

Involved in the binding of tRNA to the ribosomes. The chain is Small ribosomal subunit protein uS10 from Natronomonas pharaonis (strain ATCC 35678 / DSM 2160 / CIP 103997 / JCM 8858 / NBRC 14720 / NCIMB 2260 / Gabara) (Halobacterium pharaonis).